The following is a 460-amino-acid chain: Dynactin subunit 4 (460 aa).

Residue A2 is modified to N-acetylalanine. Residues 152 to 172 (QQLAQKEKVERDRKKLARRRN) adopt a coiled-coil conformation. At S196 the chain carries Phosphoserine. K215 is covalently cross-linked (Glycyl lysine isopeptide (Lys-Gly) (interchain with G-Cter in SUMO2)). The residue at position 407 (T407) is a Phosphothreonine.

It belongs to the dynactin subunit 4 family. In terms of assembly, subunit of dynactin, a multiprotein complex part of a tripartite complex with dynein and a adapter, such as BICDL1, BICD2 or HOOK3. The dynactin complex is built around ACTR1A/ACTB filament and consists of an actin-related filament composed of a shoulder domain, a pointed end and a barbed end. Its length is defined by its flexible shoulder domain. The soulder is composed of 2 DCTN1 subunits, 4 DCTN2 and 2 DCTN3. The 4 DCNT2 (via N-terminus) bind the ACTR1A filament and act as molecular rulers to determine the length. The pointed end is important for binding dynein-dynactin cargo adapters. Consists of 4 subunits: ACTR10, DCNT4, DCTN5 and DCTN6. The barbed end is composed of a CAPZA1:CAPZB heterodimers, which binds ACTR1A/ACTB filament and dynactin and stabilizes dynactin. Interacts with ATP7B, but not ATP7A, in a copper-dependent manner. Interacts with ANK2; this interaction is required for localization at costameres. Interacts with N4BP2L1.

It localises to the cytoplasm. The protein resides in the cytoskeleton. Its subcellular location is the microtubule organizing center. It is found in the centrosome. The protein localises to the stress fiber. It localises to the cell cortex. The protein resides in the myofibril. Its subcellular location is the sarcomere. Its function is as follows. Part of the dynactin complex that activates the molecular motor dynein for ultra-processive transport along microtubules. This Homo sapiens (Human) protein is Dynactin subunit 4.